The primary structure comprises 428 residues: C4-dicarboxylate transport protein (428 aa).

Transmembrane regions (helical) follow at residues serine 7–proline 27, phenylalanine 40–isoleucine 60, leucine 75–valine 95, alanine 143–leucine 163, proline 196–phenylalanine 216, leucine 221–alanine 241, isoleucine 306–glycine 326, phenylalanine 329–glycine 349, and isoleucine 351–isoleucine 371.

This sequence belongs to the dicarboxylate/amino acid:cation symporter (DAACS) (TC 2.A.23) family.

The protein localises to the cell inner membrane. Its function is as follows. Responsible for the transport of dicarboxylates such as succinate, fumarate, and malate from the periplasm across the membrane. The sequence is that of C4-dicarboxylate transport protein from Solibacter usitatus (strain Ellin6076).